We begin with the raw amino-acid sequence, 188 residues long: Pyridoxal 5'-phosphate synthase subunit PdxT (188 aa).

L-glutamine is bound at residue 46–48; that stretch reads GES. The active-site Nucleophile is cysteine 78. Residues arginine 105 and 134–135 each bind L-glutamine; that span reads IR. Residues histidine 170 and glutamate 172 each act as charge relay system in the active site.

It belongs to the glutaminase PdxT/SNO family. In terms of assembly, in the presence of PdxS, forms a dodecamer of heterodimers. Only shows activity in the heterodimer.

The enzyme catalyses aldehydo-D-ribose 5-phosphate + D-glyceraldehyde 3-phosphate + L-glutamine = pyridoxal 5'-phosphate + L-glutamate + phosphate + 3 H2O + H(+). It catalyses the reaction L-glutamine + H2O = L-glutamate + NH4(+). Its pathway is cofactor biosynthesis; pyridoxal 5'-phosphate biosynthesis. Its function is as follows. Catalyzes the hydrolysis of glutamine to glutamate and ammonia as part of the biosynthesis of pyridoxal 5'-phosphate. The resulting ammonia molecule is channeled to the active site of PdxS. In Thermotoga petrophila (strain ATCC BAA-488 / DSM 13995 / JCM 10881 / RKU-1), this protein is Pyridoxal 5'-phosphate synthase subunit PdxT.